The chain runs to 151 residues: 6,7-dimethyl-8-ribityllumazine synthase (151 aa).

Residues phenylalanine 23, 55–57 (AYE), and 79–81 (AVI) each bind 5-amino-6-(D-ribitylamino)uracil. A (2S)-2-hydroxy-3-oxobutyl phosphate-binding site is contributed by 84–85 (AT). Histidine 87 functions as the Proton donor in the catalytic mechanism. Phenylalanine 111 is a 5-amino-6-(D-ribitylamino)uracil binding site. Arginine 125 is a binding site for (2S)-2-hydroxy-3-oxobutyl phosphate.

The protein belongs to the DMRL synthase family.

The catalysed reaction is (2S)-2-hydroxy-3-oxobutyl phosphate + 5-amino-6-(D-ribitylamino)uracil = 6,7-dimethyl-8-(1-D-ribityl)lumazine + phosphate + 2 H2O + H(+). It functions in the pathway cofactor biosynthesis; riboflavin biosynthesis; riboflavin from 2-hydroxy-3-oxobutyl phosphate and 5-amino-6-(D-ribitylamino)uracil: step 1/2. In terms of biological role, catalyzes the formation of 6,7-dimethyl-8-ribityllumazine by condensation of 5-amino-6-(D-ribitylamino)uracil with 3,4-dihydroxy-2-butanone 4-phosphate. This is the penultimate step in the biosynthesis of riboflavin. The sequence is that of 6,7-dimethyl-8-ribityllumazine synthase from Leptospira interrogans serogroup Icterohaemorrhagiae serovar copenhageni (strain Fiocruz L1-130).